Reading from the N-terminus, the 71-residue chain is Cell division protein FtsB (71 aa).

The Cytoplasmic segment spans residues 1–3 (MKI). A helical membrane pass occupies residues 4-21 (LKIFLLSLLFWLQYSLWF). At 22 to 71 (GKNGVLDFIKIYRRVTIEKKNNEYLDMRNNQIILEIENFNNHINKDKKKT) the chain is on the extracellular side.

This sequence belongs to the FtsB family.

Its subcellular location is the cell membrane. Essential cell division protein. May link together the upstream cell division proteins, which are predominantly cytoplasmic, with the downstream cell division proteins, which are predominantly extracellular. This Buchnera aphidicola subsp. Acyrthosiphon pisum (strain APS) (Acyrthosiphon pisum symbiotic bacterium) protein is Cell division protein FtsB.